The following is a 160-amino-acid chain: Small ribosomal subunit protein uS7 (160 aa).

Belongs to the universal ribosomal protein uS7 family. Part of the 30S ribosomal subunit. Contacts proteins S9 and S11.

In terms of biological role, one of the primary rRNA binding proteins, it binds directly to 16S rRNA where it nucleates assembly of the head domain of the 30S subunit. Is located at the subunit interface close to the decoding center, probably blocks exit of the E-site tRNA. The sequence is that of Small ribosomal subunit protein uS7 from Rickettsia massiliae (strain Mtu5).